A 395-amino-acid chain; its full sequence is Chorismate synthase (395 aa).

The NADP(+) site is built by arginine 40 and arginine 46. FMN is bound by residues arginine 134–serine 136, glutamine 256–alanine 257, glycine 301, lysine 316–threonine 320, and arginine 342.

Belongs to the chorismate synthase family. Homotetramer. Requires FMNH2 as cofactor.

The catalysed reaction is 5-O-(1-carboxyvinyl)-3-phosphoshikimate = chorismate + phosphate. It functions in the pathway metabolic intermediate biosynthesis; chorismate biosynthesis; chorismate from D-erythrose 4-phosphate and phosphoenolpyruvate: step 7/7. In terms of biological role, catalyzes the anti-1,4-elimination of the C-3 phosphate and the C-6 proR hydrogen from 5-enolpyruvylshikimate-3-phosphate (EPSP) to yield chorismate, which is the branch point compound that serves as the starting substrate for the three terminal pathways of aromatic amino acid biosynthesis. This reaction introduces a second double bond into the aromatic ring system. This chain is Chorismate synthase, found in Beutenbergia cavernae (strain ATCC BAA-8 / DSM 12333 / CCUG 43141 / JCM 11478 / NBRC 16432 / NCIMB 13614 / HKI 0122).